Consider the following 467-residue polypeptide: GTPase Der (467 aa).

2 EngA-type G domains span residues 3-167 (PTLV…PYEE) and 179-352 (PVIA…AAAR). GTP contacts are provided by residues 9-16 (GRPNVGKS), 56-60 (DTGGF), 119-122 (NKTE), 185-192 (GRPNVGKS), 232-236 (DTAGL), and 297-300 (NKWD). The 85-residue stretch at 353–437 (AHIPTPKLTR…PLRVEFRTGH (85 aa)) folds into the KH-like domain. Residues 434-467 (RTGHNPYAGKKTPLTEEEARRAHSRRRRNRKKYG) are disordered. Positions 455 to 467 (AHSRRRRNRKKYG) are enriched in basic residues.

Belongs to the TRAFAC class TrmE-Era-EngA-EngB-Septin-like GTPase superfamily. EngA (Der) GTPase family. As to quaternary structure, associates with the 50S ribosomal subunit.

GTPase that plays an essential role in the late steps of ribosome biogenesis. The chain is GTPase Der from Nitrosomonas europaea (strain ATCC 19718 / CIP 103999 / KCTC 2705 / NBRC 14298).